The primary structure comprises 314 residues: Lipoyl synthase (314 aa).

[4Fe-4S] cluster contacts are provided by C60, C65, C71, C86, C90, C93, and S300. One can recognise a Radical SAM core domain in the interval 72–289 (FRKGTATFMI…RQFGLSIGFS (218 aa)).

It belongs to the radical SAM superfamily. Lipoyl synthase family. It depends on [4Fe-4S] cluster as a cofactor.

Its subcellular location is the cytoplasm. The catalysed reaction is [[Fe-S] cluster scaffold protein carrying a second [4Fe-4S](2+) cluster] + N(6)-octanoyl-L-lysyl-[protein] + 2 oxidized [2Fe-2S]-[ferredoxin] + 2 S-adenosyl-L-methionine + 4 H(+) = [[Fe-S] cluster scaffold protein] + N(6)-[(R)-dihydrolipoyl]-L-lysyl-[protein] + 4 Fe(3+) + 2 hydrogen sulfide + 2 5'-deoxyadenosine + 2 L-methionine + 2 reduced [2Fe-2S]-[ferredoxin]. Its pathway is protein modification; protein lipoylation via endogenous pathway; protein N(6)-(lipoyl)lysine from octanoyl-[acyl-carrier-protein]: step 2/2. Catalyzes the radical-mediated insertion of two sulfur atoms into the C-6 and C-8 positions of the octanoyl moiety bound to the lipoyl domains of lipoate-dependent enzymes, thereby converting the octanoylated domains into lipoylated derivatives. The chain is Lipoyl synthase from Pelobacter propionicus (strain DSM 2379 / NBRC 103807 / OttBd1).